The sequence spans 158 residues: Placenta growth factor (158 aa).

Positions M1–G23 form a signal peptide, or 26. 2 N-linked (GlcNAc...) asparagine glycosylation sites follow: N29 and N30. Disulfide bonds link C48–C90, C79–C125, and C83–C127. N-linked (GlcNAc...) asparagine glycosylation occurs at N97. Residues A136–L158 form a disordered region. Residues E137–S148 are compositionally biased toward basic residues.

This sequence belongs to the PDGF/VEGF growth factor family. As to quaternary structure, antiparallel homodimer; disulfide-linked. Also found as heterodimer with VEGFA/VEGF.

Its subcellular location is the secreted. In terms of biological role, growth factor active in angiogenesis and endothelial cell growth, stimulating their proliferation and migration. It binds to the receptor FLT1/VEGFR-1. Also promotes cell tumor growth. The chain is Placenta growth factor (Pgf) from Rattus norvegicus (Rat).